Consider the following 151-residue polypeptide: Small ribosomal subunit protein uS15 (151 aa).

Positions 1-11 (MPHRSRHKKGR) are enriched in basic residues. The tract at residues 1–24 (MPHRSRHKKGRSSSVRPPHPTVPT) is disordered.

This sequence belongs to the universal ribosomal protein uS15 family. Part of the 30S ribosomal subunit.

The protein is Small ribosomal subunit protein uS15 of Pyrobaculum calidifontis (strain DSM 21063 / JCM 11548 / VA1).